The primary structure comprises 141 residues: Nucleoside diphosphate kinase (141 aa).

Residues lysine 11, phenylalanine 59, arginine 87, threonine 93, arginine 104, and asparagine 114 each coordinate ATP. Histidine 117 (pros-phosphohistidine intermediate) is an active-site residue.

It belongs to the NDK family. Homotetramer. The cofactor is Mg(2+).

Its subcellular location is the cytoplasm. The catalysed reaction is a 2'-deoxyribonucleoside 5'-diphosphate + ATP = a 2'-deoxyribonucleoside 5'-triphosphate + ADP. It catalyses the reaction a ribonucleoside 5'-diphosphate + ATP = a ribonucleoside 5'-triphosphate + ADP. In terms of biological role, major role in the synthesis of nucleoside triphosphates other than ATP. The ATP gamma phosphate is transferred to the NDP beta phosphate via a ping-pong mechanism, using a phosphorylated active-site intermediate. The chain is Nucleoside diphosphate kinase from Xylella fastidiosa (strain M23).